Consider the following 3169-residue polypeptide: MHSAGTPGLSSRRTGNSTSFQPGPPPPPRLLLLLLLLLSLVSRVPAQPAAFGRALLSPGLAGAAGVPAEEAIVLANRGLRVPFGREVWLDPLHDLVLQVQPGDRCAVSVLDNDALAQRPGRLSPKRFPCDFGPGEVRYSHLGARSPSRDRVRLQLRYDAPGGAVVLPLVLEVEVVFTQLEVVTRNLPLVVEELLGTSNALDARSLEFAFQPETEECRVGILSGLGALPRYGELLHYPQVPGGAREGGAPETLLMDCKAFQELGVRYRHTAASRSPNRDWIPMVVELRSRGAPVGSPALKREHFQVLVRIRGGAENTAPKPSFVAMMMMEVDQFVLTALTPDMLAAEDAESPSDLLIFNLTSPFQPGQGYLVSTDDRSLPLSSFTQRDLRLLKIAYQPPSEDSDQERLFELELEVVDLEGAASDPFAFMVVVKPMNTMAPVVTRNTGLILYEGQSRPLTGPAGSGPQNLVISDEDDLEAVRLEVVAGLRHGHLVILGASSGSSAPKSFTVAELAAGQVVYQHDDRDGSLSDNLVLRMVDGGGRHQVQFLFPITLVPVDDQPPVLNANTGLTLAEGETVPILPLSLSATDMDSDDSLLLFVLESPFLTTGHLLLRQTHPPHEKQELLRGLWRKEGAFYERTVTEWQQQDITEGRLFYRHSGPHSPGPVTDQFTFRVQDNHDPPNQSGLQRFVIRIHPVDRLPPELGSGCPLRMVVQESQLTPLRKKWLRYTDLDTDDRELRYTVTQPPTDTDENHLPAPLGTLVLTDNPSVVVTHFTQAQINHHKIAYRPPGQELGVATRVAQFQFQVEDRAGNVAPGTFTLYLHPVDNQPPEILNTGFTIQEKGHHILSETELHVNDVDTDVAHISFTLTQAPKHGHMRVSGQILHVGGLFHLEDIKQGRVSYAHNGDKSLTDSCSLEVSDRHHVVPITLRVNVRPVDDEVPILSHPTGTLESYLDVLENGATEITANVIKGTNEETDDLMLTFLLEDPPLYGEILVNGIPAEQFTQRDILEGSVVYTHTSGEIGLLPKADSFNLSLSDMSQEWRIGGNTIQGVTIWVTILPVDSQAPEIFVGEQLIVMEGDKSVITSVHISAEDVDSLNDDILCTIVIQPTSGYVENISPAPGSEKSRAGIAISAFNLKDLRQGHINYVQSVHKGVEPVEDRFVFRCSDGINFSERQFFPIVIIPTNDEQPEMFMREFMVMEGMSLVIDTPILNAADADVPLDDLTFTITQFPTHGHIMNQLINGTVLVESFTLDQIIESSSIIYEHDDSETQEDSFVIKLTDGKHSVEKTVLIIVIPVDDETPRMTINNGLEIEIGDTKIINNKILMATDLDSEDKSLVYIIRYGPGHGLLQRRKPTGAFENITLGMNFTQDEVDRNLIQYVHLGQEGIRDLIKFDVTDGINPLIDRYFYVSIGSIDIVFPDVISKGVSLKEGGKVTLTTDLLSTSDLNSPDENLVFTITRAPMRGHLECTDQPGVSITSFTQLQLAGNKIYYIHTADDEVKMDSFEFQVTDGRNPVFRTFRISISDVDNKKPVVTIHKLVVSESENKLITPFELTVEDRDTPDKLLKFTITQVPIHGHLLFNNTRPVMVFTKQDLNENLISYKHDGTESSEDSFSFTVTDGTHTDFYVFPDTVFETRRPQVMKIQVLAVDNSVPQIAVNKGASTLRTLATGHLGFMITSKILKVEDRDSLHISLRFIVTEAPQHGYLLNLDKGNHSITQFTQADIDDMKICYVLREGANATSDMFYFAVEDGGGNKLTYQNFRLNWAWISFEKEYYLVNEDSKFLDVVLKRRGYLGETSFISIGTRDRTAEKDKDFKGKAQKQVQFNPGQTRATWRVRILSDGEHEQSETFQVVLSEPVLAALEFPTVATVEIVDPGDEPTVFIPQSKYSVEEDVGELFIPIRRSGDVSQELMVVCYTQQGTATGTVPTSVLSYSDYISRPEDHTSVVRFDKDEREKLCRIVIIDDSLYEEEETFHVLLSMPMGGRIGSEFPGAQVTIVPDKDDEPIFYFGDVEYSVDESAGYVEVQVWRTGTDLSKSSSVTVRSRKTDPPSADAGTDYVGISRNLDFAPGVNMQPVRVVILDDLGQPALEGIEKFELVLRMPMNAALGEPSKATVSINDSVSDLPKMQFKERIYTGSESDGQIVTMIHRTGDVQYRSSVRCYTRQGSAQVMMDFEERPNTDTSIITFLPGETEKPCILELMDDVLYEEVEELRLVLGTPQSNSPFGAAVGEQNETLIRIRDDADKTVIKFGETKFSVTEPKEPGESVVIRIPVIRQGDTSKVSIVRVHTKDGSATSGEDYHPVSEEIEFKEGETQHVVEIEVTFDGVREMREAFTVHLKPDENMIAEMQLTKAIVYIEEMSSMADVTFPSVPQIVSLLMYDDTSKAKESAEPMSGYPVICITACNPKYSDYDKTGSICASENINDTLTRYRWLISAPAGPDGVTSPMREVDFDTFFTSSKMVTLDSIYFQPGSRVQCAARAVNTNGDEGLELMSPIVTISREEGLCQPRVPGVVGAEPFSAKLRYTGPEDADYTNLIKLTVTMPHIDGMLPVISTRELSNFELTLSPDGTRVGNHKCSNLLDYTEVKTHYGFLTDATKNPEIIGETYPYQYSLSIRGSTTLRFYRNLNLEACLWEFVSYYDMSELLADCGGTIGTDGQVLNLVQSYVTLRVPLYVSYVFHSPVGVGGWQHFDLKSELRLTFVYDTAILWNDGIGSPPEAELQGSLYPTSMRIGDEGRLAVHFKTEAQFHGLFVLSHPASFTSSVIMSADHPGLTFSLRLIRSEPTYNQPVQQWSFVSDFAVRDYSGTYTVKLVPCTAPSHQEYRLPVTCNPREPVTFDLDIRFQQVSDPVAAEFSLNTQMYLLSKKSLWLSDGSMGFGQESDVAFAEGDIIYGRVMVDPVQNLGDSFYCSIEKVFLCTGADGYVPKYSPMNAEYGCLADSPSLLYRFKIVDKAQPETQATSFGNVLFNAKLAVDDPEAILLVNQPGSDGFKVDSTPLFQVALGREWYIHTIYTVRSKDNANRGIGKRSVEYHSLVSQGKPQSTTKSRKKREIRSTPSLAWEIGAENSRGTNIQHIALDRTKRQIPHGRAPPDGILPWELNSPSSAVSLVTVVGGTTVGLLTICLTVIAVLMCRGKESFRGKDAPKGSSSSEPMVPPQSHHNDSSEV.

A disordered region spans residues 1 to 24; the sequence is MHSAGTPGLSSRRTGNSTSFQPGP. The first 46 residues, 1 to 46, serve as a signal peptide directing secretion; sequence MHSAGTPGLSSRRTGNSTSFQPGPPPPPRLLLLLLLLLSLVSRVPA. Residues 8-21 are compositionally biased toward polar residues; the sequence is GLSSRRTGNSTSFQ. The Extracellular segment spans residues 47-3113; that stretch reads QPAAFGRALL…SPSSAVSLVT (3067 aa). CSPG repeat units lie at residues 319-413, 438-537, 560-675, 700-807, 828-919, 945-1037, 1066-1168, 1189-1282, 1303-1399, 1420-1512, 1532-1621, and 1655-1752; these read KPSF…LELE, APVV…LRMV, PPVL…FRVQ, PPEL…FQVE, QPPE…LEVS, HPTG…LSLS, APEI…FRCS, EQPE…IKLT, TPRM…FDVT, VFPD…FQVT, KKPV…FTVT, and VPQI…FAVE. Asn-358 carries N-linked (GlcNAc...) asparagine glycosylation. N-linked (GlcNAc...) asparagine glycosylation is found at Asn-1244 and Asn-1369. Asn-1584 and Asn-1741 each carry an N-linked (GlcNAc...) asparagine glycan. 5 consecutive Calx-beta domains span residues 1759 to 1858, 1871 to 1982, 1997 to 2103, 2118 to 2220, and 2238 to 2342; these read LTYQ…VVLS, ATVE…VLLS, QVTI…LVLR, VSIN…LVLG, and TLIR…VHLK. The interval 3036–3057 is disordered; it reads SLVSQGKPQSTTKSRKKREIRS. A compositionally biased stretch (polar residues) spans 3037–3047; sequence LVSQGKPQSTT. The chain crosses the membrane as a helical span at residues 3114 to 3134; that stretch reads VVGGTTVGLLTICLTVIAVLM. Topologically, residues 3135 to 3169 are cytoplasmic; the sequence is CRGKESFRGKDAPKGSSSSEPMVPPQSHHNDSSEV. Residues 3141-3169 form a disordered region; it reads FRGKDAPKGSSSSEPMVPPQSHHNDSSEV.

This sequence belongs to the FRAS1 family. Interacts with FREM1.

The protein localises to the cell membrane. Extracellular matrix protein required for maintenance of the integrity of the skin epithelium and for maintenance of renal epithelia. Required for epidermal adhesion. Involved in the development of eyelids and the anterior segment of the eyeballs. The polypeptide is FRAS1-related extracellular matrix protein 2 (FREM2) (Homo sapiens (Human)).